Reading from the N-terminus, the 603-residue chain is Proline--tRNA ligase (603 aa).

The protein belongs to the class-II aminoacyl-tRNA synthetase family. ProS type 1 subfamily. As to quaternary structure, homodimer.

Its subcellular location is the cytoplasm. It carries out the reaction tRNA(Pro) + L-proline + ATP = L-prolyl-tRNA(Pro) + AMP + diphosphate. Catalyzes the attachment of proline to tRNA(Pro) in a two-step reaction: proline is first activated by ATP to form Pro-AMP and then transferred to the acceptor end of tRNA(Pro). As ProRS can inadvertently accommodate and process non-cognate amino acids such as alanine and cysteine, to avoid such errors it has two additional distinct editing activities against alanine. One activity is designated as 'pretransfer' editing and involves the tRNA(Pro)-independent hydrolysis of activated Ala-AMP. The other activity is designated 'posttransfer' editing and involves deacylation of mischarged Ala-tRNA(Pro). The misacylated Cys-tRNA(Pro) is not edited by ProRS. This chain is Proline--tRNA ligase, found in Microcystis aeruginosa (strain NIES-843 / IAM M-2473).